The sequence spans 123 residues: MALKIRLARGGSKKRPYYHVVLADARSPRDGRFLENLGSWNPMLAKDDEKRVQLNAERIKHWIEHGAQPTDRVLRFLDEAGVAKREVKNNPVKAKPGKRAQERAAEKAQKVADAAAAAADAAE.

The interval 87-123 (VKNNPVKAKPGKRAQERAAEKAQKVADAAAAAADAAE) is disordered. Residues 99–110 (RAQERAAEKAQK) show a composition bias toward basic and acidic residues. Residues 111 to 123 (VADAAAAAADAAE) are compositionally biased toward low complexity.

This sequence belongs to the bacterial ribosomal protein bS16 family.

The sequence is that of Small ribosomal subunit protein bS16 from Rhizobium johnstonii (strain DSM 114642 / LMG 32736 / 3841) (Rhizobium leguminosarum bv. viciae).